Here is a 289-residue protein sequence, read N- to C-terminus: Phosphatidylserine decarboxylase proenzyme (289 aa).

Active-site charge relay system; for autoendoproteolytic cleavage activity residues include Asp92, His149, and Ser254. Ser254 functions as the Schiff-base intermediate with substrate; via pyruvic acid; for decarboxylase activity in the catalytic mechanism. Position 254 is a pyruvic acid (Ser); by autocatalysis (Ser254).

It belongs to the phosphatidylserine decarboxylase family. PSD-B subfamily. Prokaryotic type I sub-subfamily. As to quaternary structure, heterodimer of a large membrane-associated beta subunit and a small pyruvoyl-containing alpha subunit. Requires pyruvate as cofactor. Post-translationally, is synthesized initially as an inactive proenzyme. Formation of the active enzyme involves a self-maturation process in which the active site pyruvoyl group is generated from an internal serine residue via an autocatalytic post-translational modification. Two non-identical subunits are generated from the proenzyme in this reaction, and the pyruvate is formed at the N-terminus of the alpha chain, which is derived from the carboxyl end of the proenzyme. The autoendoproteolytic cleavage occurs by a canonical serine protease mechanism, in which the side chain hydroxyl group of the serine supplies its oxygen atom to form the C-terminus of the beta chain, while the remainder of the serine residue undergoes an oxidative deamination to produce ammonia and the pyruvoyl prosthetic group on the alpha chain. During this reaction, the Ser that is part of the protease active site of the proenzyme becomes the pyruvoyl prosthetic group, which constitutes an essential element of the active site of the mature decarboxylase.

The protein localises to the cell membrane. The enzyme catalyses a 1,2-diacyl-sn-glycero-3-phospho-L-serine + H(+) = a 1,2-diacyl-sn-glycero-3-phosphoethanolamine + CO2. It participates in phospholipid metabolism; phosphatidylethanolamine biosynthesis; phosphatidylethanolamine from CDP-diacylglycerol: step 2/2. In terms of biological role, catalyzes the formation of phosphatidylethanolamine (PtdEtn) from phosphatidylserine (PtdSer). The protein is Phosphatidylserine decarboxylase proenzyme of Pseudomonas aeruginosa (strain ATCC 15692 / DSM 22644 / CIP 104116 / JCM 14847 / LMG 12228 / 1C / PRS 101 / PAO1).